We begin with the raw amino-acid sequence, 89 residues long: Small ribosomal subunit protein uS14 (89 aa).

This sequence belongs to the universal ribosomal protein uS14 family. Part of the 30S ribosomal subunit. Contacts proteins S3 and S10.

Binds 16S rRNA, required for the assembly of 30S particles and may also be responsible for determining the conformation of the 16S rRNA at the A site. This chain is Small ribosomal subunit protein uS14, found in Leuconostoc citreum (strain KM20).